Here is a 48-residue protein sequence, read N- to C-terminus: Large ribosomal subunit protein eL40 (48 aa).

It belongs to the eukaryotic ribosomal protein eL40 family.

The polypeptide is Large ribosomal subunit protein eL40 (Methanosphaerula palustris (strain ATCC BAA-1556 / DSM 19958 / E1-9c)).